The primary structure comprises 132 residues: Small ribosomal subunit protein uS8 (132 aa).

This sequence belongs to the universal ribosomal protein uS8 family. In terms of assembly, part of the 30S ribosomal subunit. Contacts proteins S5 and S12.

Its function is as follows. One of the primary rRNA binding proteins, it binds directly to 16S rRNA central domain where it helps coordinate assembly of the platform of the 30S subunit. In Francisella tularensis subsp. novicida (strain U112), this protein is Small ribosomal subunit protein uS8.